Consider the following 310-residue polypeptide: MGKKMSLILGAFLSVFLLVACSSTGTKTAKSDKLKVVATNSIIADMTKAIAGDKIDLHSIVPIGQDPHEYEPLPEDVEKTSNADVIFYNGINLEDGGQAWFTKLVKNAQKTKNKDYFAVSDGIDVIYLEGASEKGKEDPHAWLNLENGIIYSKNIAKQLIAKDPKNKETYEKNLKAYVAKLEKLDKEAKSKFDAIAENKKLIVTSEGCFKYFSKAYGVPSAYIWEINTEEEGTPDQISSLIEKLKVIKPSALFVESSVDRRPMETVSKDSGIPIYSEIFTDSIAKKGKPGDSYYAMMKWNLDKISEGLAK.

The signal sequence occupies residues 1 to 20 (MGKKMSLILGAFLSVFLLVA). Cys-21 carries the N-palmitoyl cysteine lipid modification. A lipid anchor (S-diacylglycerol cysteine) is attached at Cys-21. Fe(2+) contacts are provided by His-68, His-140, Glu-206, and Asp-281.

The protein belongs to the bacterial solute-binding protein 9 family. Lipoprotein receptor antigen (Lrai) subfamily.

It localises to the cell membrane. In terms of biological role, part of the ATP-binding cassette (ABC) transport system MtsABC involved in iron import. Binds iron with high affinity and specificity and delivers it to the membrane permease for translocation into the cytoplasm. Has low affinity for Zn(2+) and Cu(2+). In Streptococcus pyogenes serotype M6 (strain ATCC BAA-946 / MGAS10394), this protein is Iron ABC transporter substrate-binding lipoprotein MtsA (mtsA).